The following is a 421-amino-acid chain: Lipid II:glycine glycyltransferase (421 aa).

This sequence belongs to the FemABX family. As to quaternary structure, monomer.

The protein resides in the cytoplasm. It carries out the reaction beta-D-GlcNAc-(1-&gt;4)-Mur2Ac(oyl-L-Ala-D-isoglutaminyl-L-Lys-D-Ala-D-Ala)-di-trans,octa-cis-undecaprenyl diphosphate + glycyl-tRNA(Gly) = beta-D-GlcNAc-(1-&gt;4)-Mur2Ac(oyl-L-Ala-D-isoglutaminyl-L-Lys-(N(6)-Gly)-D-Ala-D-Ala)-di-trans,octa-cis-undecaprenyl diphosphate + tRNA(Gly) + H(+). Its function is as follows. Catalyzes the incorporation of the first glycine of the pentaglycine interpeptide bridge, which is characteristic of the S.aureus peptidoglycan. This glycine is added to the epsilon-amino group of the L-lysine of the membrane-bound lipid II intermediate (GlcNAc-(beta-1,4)-N-acetylmuramic acid(-L-Ala-D-iGln-L-Lys-D-Ala-D-Ala)-pyrophosphoryl-undecaprenol), using glycyl-tRNA(Gly) as donor, in a ribosome-independent mechanism. Involved in methicillin resistance. In Staphylococcus aureus (strain MRSA252), this protein is Lipid II:glycine glycyltransferase (femX).